Reading from the N-terminus, the 130-residue chain is Small ribosomal subunit protein uS8 (130 aa).

This sequence belongs to the universal ribosomal protein uS8 family. In terms of assembly, part of the 30S ribosomal subunit. Contacts proteins S5 and S12.

Its function is as follows. One of the primary rRNA binding proteins, it binds directly to 16S rRNA central domain where it helps coordinate assembly of the platform of the 30S subunit. This is Small ribosomal subunit protein uS8 from Ruegeria sp. (strain TM1040) (Silicibacter sp.).